A 255-amino-acid polypeptide reads, in one-letter code: Pyridoxine 5'-phosphate synthase (255 aa).

3-amino-2-oxopropyl phosphate is bound by residues asparagine 8 and arginine 19. The Proton acceptor role is filled by histidine 44. 1-deoxy-D-xylulose 5-phosphate is bound by residues arginine 46 and histidine 51. Catalysis depends on glutamate 74, which acts as the Proton acceptor. Threonine 111 is a binding site for 1-deoxy-D-xylulose 5-phosphate. Histidine 202 acts as the Proton donor in catalysis. Residues aspartate 203 and 225–226 each bind 3-amino-2-oxopropyl phosphate; that span reads GH.

It belongs to the PNP synthase family. Homooctamer; tetramer of dimers.

The protein localises to the cytoplasm. It carries out the reaction 3-amino-2-oxopropyl phosphate + 1-deoxy-D-xylulose 5-phosphate = pyridoxine 5'-phosphate + phosphate + 2 H2O + H(+). Its pathway is cofactor biosynthesis; pyridoxine 5'-phosphate biosynthesis; pyridoxine 5'-phosphate from D-erythrose 4-phosphate: step 5/5. Functionally, catalyzes the complicated ring closure reaction between the two acyclic compounds 1-deoxy-D-xylulose-5-phosphate (DXP) and 3-amino-2-oxopropyl phosphate (1-amino-acetone-3-phosphate or AAP) to form pyridoxine 5'-phosphate (PNP) and inorganic phosphate. This Xanthomonas oryzae pv. oryzae (strain PXO99A) protein is Pyridoxine 5'-phosphate synthase.